The primary structure comprises 336 residues: Serpentine receptor class gamma-9 (336 aa).

7 helical membrane-spanning segments follow: residues 30 to 50 (LLQA…LYVI), 64 to 84 (FVIY…DIFI), 111 to 131 (IYYP…IFLT), 152 to 172 (LSFI…NTII), 200 to 220 (FLFL…VIMF), 237 to 257 (LCLA…FEAL), and 271 to 291 (FLIQ…IMIF).

This sequence belongs to the nematode receptor-like protein srg family.

It is found in the membrane. The protein is Serpentine receptor class gamma-9 (srg-9) of Caenorhabditis elegans.